The following is a 1071-amino-acid chain: MTSPAKFKKDKEIIAEYDTQVKEIRAQLTEQMKCLDQQCELRVQLLQDLQDFFRKKAEIEMDYSRNLEKLAERFLAKTRSTKDQQFKKDQNVLSPVNCWNLLLNQVKRESRDHTTLSDIYLNNIIPRFVQVSEDSGRLFKKSKEVGQQLQDDLMKVLNELYSVMKTYHMYNADSISAQSKLKEAEKQEEKQIGKSVKQEDRQTPRSPDSTANVRIEEKHVRRSSVKKIEKMKEKRQAKYTENKLKAIKARNEYLLALEATNASVFKYYIHDLSDIIDQCCDLGYHASLNRALRTFLSAELNLEQSKHEGLDAIENAVENLDATSDKQRLMEMYNNVFCPPMKFEFQPHMGDMASQLCAQQPVQSELVQRCQQLQSRLSTLKIENEEVKKTMEATLQTIQDIVTVEDFDVSDCFQYSNSMESVKSTVSETFMSKPSIAKRRANQQETEQFYFTKMKEYLEGRNLITKLQAKHDLLQKTLGESQRTDCSLARRSSTVRKQDSSQAIPLVVESCIRFISRHGLQHEGIFRVSGSQVEVNDIKNAFERGEDPLAGDQNDHDMDSIAGVLKLYFRGLEHPLFPKDIFHDLIACVTMDNLQERAVHIRKVLLVLPKPTLIIMRYLFAFLNHLSQFSEENMMDPYNLAICFGPSLMSVPEGHDQVSCQAHVNELIKTIIIQHENIFPNPRELEGPIYSRGGSMEDYCDSTHGETTSAEDSTQDVTAEHHTSDDECEPIEAIAKFDYVGRTARELSFKKGASLLLYQRASDDWWEGRHNGIDGLIPHQYIVVQDTEDGVVERSSPKSEIEVMSEPPEEKVTARTGASCPSGGHVADIYLANINKQRKRPESGSIRKAFRSDSHGLGSSLTDSSSLGVGASCRPSSQPIMSQNLPKEGPDKCSISGHGSLNSISRHSSLKNRMDSPQIRKTATAGRSKSFNNHRPMDPEVIAQDIEATMNSALNELQELERQSSAKHTPDVVLDTLEPLKTSPVVAPTSEPSSPLHTQLLKDPEPAFQRSASTAGDIACAFRPVKSVKMAAPVKPPATRPKPTVFPKTNATSPGVNSSASPQATDKSCTV.

Positions 22 to 325 (KEIRAQLTEQ…AVENLDATSD (304 aa)) constitute an F-BAR domain. Residues 181–203 (LKEAEKQEEKQIGKSVKQEDRQT) show a composition bias toward basic and acidic residues. The interval 181 to 211 (LKEAEKQEEKQIGKSVKQEDRQTPRSPDSTA) is disordered. Position 206 is a phosphoserine (Ser206). A coiled-coil region spans residues 363–401 (QSELVQRCQQLQSRLSTLKIENEEVKKTMEATLQTIQDI). Residues Ser427, Ser500, Ser691, and Ser695 each carry the phosphoserine modification. The Rho-GAP domain maps to 489 to 679 (ARRSSTVRKQ…TIIIQHENIF (191 aa)). A disordered region spans residues 700–726 (CDSTHGETTSAEDSTQDVTAEHHTSDD). A compositionally biased stretch (polar residues) spans 705–717 (GETTSAEDSTQDV). Ser724 bears the Phosphoserine mark. The SH3 domain maps to 728-787 (CEPIEAIAKFDYVGRTARELSFKKGASLLLYQRASDDWWEGRHNGIDGLIPHQYIVVQDT). Position 795 is a phosphoserine (Ser795). Disordered stretches follow at residues 795–819 (SSPK…TGAS) and 838–918 (RKRP…DSPQ). Residues 855 to 868 (HGLGSSLTDSSSLG) show a composition bias toward low complexity. Composition is skewed to polar residues over residues 874 to 885 (RPSSQPIMSQNL) and 897 to 907 (GHGSLNSISRH). Ser916 is subject to Phosphoserine. Symmetric dimethylarginine; by PRMT5 is present on Arg927. A Phosphoserine modification is found at Ser930. Positions 940-968 (EVIAQDIEATMNSALNELQELERQSSAKH) form a coiled coil. The disordered stretch occupies residues 984–1012 (PVVAPTSEPSSPLHTQLLKDPEPAFQRSA). 4 positions are modified to phosphoserine: Ser990, Ser994, Ser1013, and Ser1027. The disordered stretch occupies residues 1029–1071 (KMAAPVKPPATRPKPTVFPKTNATSPGVNSSASPQATDKSCTV). Residues 1047 to 1071 (PKTNATSPGVNSSASPQATDKSCTV) show a composition bias toward polar residues.

Homodimer. Forms a heterooligomer with SRGAP1 and SRGAP3 through its F-BAR domain. Interacts (via SH3 domain) with GPHN. Interacts (via SH3 domain) with FMNL1 (activated by RAC1); regulates the actin filament severing activity of FMNL1 and actin dynamics. Interacts (via SH3 domain) with FMNL3. Interacts with RAC1; specifically stimulates RAC1 GTPase activity. Interacts (via F-BAR domain) with HOMER1. Interacts with ROBO1 and ROBO2. Interacts with FASLG. Interacts with PRMT5. Post-translationally, methylation at Arg-927 is required for the stimulation of cell migration, dimerization and localization at the plasma membrane protrusions.

It localises to the cell membrane. The protein localises to the cell projection. It is found in the dendritic spine. Its subcellular location is the postsynaptic density. The protein resides in the postsynaptic cell membrane. It localises to the lamellipodium. The protein localises to the cytoplasmic vesicle. It is found in the phagosome. Its subcellular location is the nucleus. The protein resides in the cytoplasm. It localises to the cytosol. Functionally, postsynaptic RAC1 GTPase activating protein (GAP) that plays a key role in neuronal morphogenesis and migration mainly during development of the cerebral cortex. Regulates excitatory and inhibitory synapse maturation and density in cortical pyramidal neurons. SRGAP2/SRGAP2A limits excitatory and inhibitory synapse density through its RAC1-specific GTPase activating activity, while it promotes maturation of both excitatory and inhibitory synapses through its ability to bind to the postsynaptic scaffolding protein HOMER1 at excitatory synapses, and the postsynaptic protein GPHN at inhibitory synapses. Mechanistically, acts by binding and deforming membranes, thereby regulating actin dynamics to regulate cell migration and differentiation. Promotes cell repulsion and contact inhibition of locomotion: localizes to protrusions with curved edges and controls the duration of RAC1 activity in contact protrusions. In non-neuronal cells, may also play a role in cell migration by regulating the formation of lamellipodia and filopodia. This Mus musculus (Mouse) protein is SLIT-ROBO Rho GTPase-activating protein 2.